We begin with the raw amino-acid sequence, 187 residues long: Cytochrome b-245 chaperone 1 (187 aa).

Residues 20-42 (GIRSWSLLVGILSIGLAAAYYSG) form a helical membrane-spanning segment. A Phosphoserine modification is found at S168.

This sequence belongs to the CYBC1 family. As to quaternary structure, interacts with CYBB; CYBC1 may act as a chaperone stabilizing Cytochrome b-245 heterodimer.

It is found in the endoplasmic reticulum membrane. Functions as a chaperone necessary for a stable expression of the CYBA and CYBB subunits of the cytochrome b-245 heterodimer. Controls the phagocyte respiratory burst and is essential for innate immunity. The polypeptide is Cytochrome b-245 chaperone 1 (Bos taurus (Bovine)).